Reading from the N-terminus, the 283-residue chain is SNAP25 homologous protein SNAP32 (283 aa).

2 disordered regions span residues 1–64 (MSGR…AAAR) and 192–212 (LGLS…EPTS). Over residues 198–212 (PPQSNARQFHSEPTS) the composition is skewed to polar residues. The t-SNARE coiled-coil homology domain maps to 218–280 (EMEKAKQDDG…KGANTRARRL (63 aa)).

This sequence belongs to the SNAP-25 family. As to quaternary structure, interacts with SYP121. In terms of tissue distribution, expressed in roots, culms and leaves.

The protein resides in the membrane. Its function is as follows. t-SNARE involved in diverse vesicle trafficking and membrane fusion processes. May be involved in resistance to the rice blast fungus Magnaporthe oryzae. May contribute to host resistance to rice blast through interaction with SYP121. The chain is SNAP25 homologous protein SNAP32 from Oryza sativa subsp. japonica (Rice).